The following is a 214-amino-acid chain: Uracil phosphoribosyltransferase (214 aa).

Residues Arg81, Arg106, and 133 to 141 (DPMLATGNS) contribute to the 5-phospho-alpha-D-ribose 1-diphosphate site. Uracil contacts are provided by residues Ile196 and 201-203 (GDA). Asp202 serves as a coordination point for 5-phospho-alpha-D-ribose 1-diphosphate.

The protein belongs to the UPRTase family. It depends on Mg(2+) as a cofactor.

The catalysed reaction is UMP + diphosphate = 5-phospho-alpha-D-ribose 1-diphosphate + uracil. It functions in the pathway pyrimidine metabolism; UMP biosynthesis via salvage pathway; UMP from uracil: step 1/1. With respect to regulation, allosterically activated by GTP. Functionally, catalyzes the conversion of uracil and 5-phospho-alpha-D-ribose 1-diphosphate (PRPP) to UMP and diphosphate. The polypeptide is Uracil phosphoribosyltransferase (Legionella pneumophila (strain Paris)).